We begin with the raw amino-acid sequence, 330 residues long: Serine/threonine-protein phosphatase PP1-alpha catalytic subunit (330 aa).

S2 is modified (N-acetylserine). Phosphoserine is present on residues S2 and S22. Residues D64, H66, D92, and N124 each contribute to the Mn(2+) site. Catalysis depends on H125, which acts as the Proton donor. Mn(2+)-binding residues include H173 and H248. K305 is modified (N6-acetyllysine). A Phosphotyrosine modification is found at Y306. Positions 306 to 330 (YGQFSGLNPGGRPITPPRNSAKAKK) are disordered. T320 is subject to Phosphothreonine. A Phosphoserine modification is found at S325.

The protein belongs to the PPP phosphatase family. PP-1 subfamily. PP1 comprises a catalytic subunit, PPP1CA, PPP1CB or PPP1CC, which is folded into its native form by inhibitor 2 and glycogen synthetase kinase 3, and then complexed to one or several targeting or regulatory subunits. PPP1R12A, PPP1R12B and PPP1R12C mediate binding to myosin. PPP1R3A (in skeletal muscle), PPP1R3B (in liver), PPP1R3C, PPP1R3D and PPP1R3F (in brain) mediate binding to glycogen. Interacts with PPP1R39. Interacts with BTBD10. Interacts with KCTD20. Interacts with PPP1R9A and PPP1R9B. Part of a complex containing PPP1R15B, PP1 and NCK1/2. Interacts with PHACTR4; which acts as an activator of PP1 activity. Interacts with PPP1R15A and PPP1R15B; the interactions mediate binding to EIF2S1. Interacts with PPP1R7. Interacts with YLPM1. Forms a complex with ILF2, ILF3, YLPM1, KHDRBS1, RBMX and NCOA5. Interacts with NOM1 and PPP1R8. Interacts with PPP1R16B. Interacts with RPSA only in the presence of PPP1R16B. Component of the PNUTS-PP1 phosphatase complex, composed of PPP1R10/PNUTS, TOX4, WDR82, and PPP1CA or PPP1CB or PPP1CC. Interacts with PPP1R10/PNUTS and PPP1R8. Interacts with WDR82 in the presence of PPP1R10/PNUTS. Interacts with TRIM28; the interaction dephosphorylates TRIM28 on 'Ser-824' and forms a complex at the p21 promoter site. Interacts with isoform 1 and isoform 4 of NEK2. Interacts with FER; this promotes phosphorylation at Thr-320. Interacts with DAB2; the interaction is mutually exclusive with the AXIN1:PPP1CA interaction. Interacts with FOXP3. Interacts with CENPA. Interacts with ATG16L1. Found in a complex with PPP1CA, PPP1CC, SHC1 and PEAK1. Interacts with tensin TNS1. Interacts with SAXO4, PPP1R21, PPP1R26, PPP1R27, PPP1R35, PPP1R36, PPP1R37, SH3RF2, ELFN1 and ELFN2. Interacts with TPRN; the interaction results in inhibition of PPC1A phosphatase activity. Interacts with SKA1 (via C-terminus); the interaction is direct and required for the recruitment of PP1 to the kinetochore. Interacts with the KNL1 complex subunit KNL1; the interaction is direct and mutually exclusive with KNL1 binding to microtubules. Component of the SHOC2-MRAS-PP1c (SMP) complex consisting of SHOC2, GTP-bound M-Ras/MRAS and the catalytic subunit of protein phosphatase 1 (either PPP1CA, PPP1CB or PPP1CC). SHOC2 and PP1c preferably bind M-Ras/MRAS, but they also bind K-Ras/KRAS, N-Ras/NRAS and H-Ras/HRAS; these interactions are GTP-dependent and both SHOC2 and PP1c are required to form a stable complex. Interacts with SHOC2 in the absence of Ras GTPases. In terms of assembly, (Microbial infection) Interacts with HHV-1 ICP34.5. As to quaternary structure, (Microbial infection) Interacts with Venezuelan equine encephalitis virus (VEEV) capsid protein; this interaction dephosphorylates the capsid protein, which increases its ability to bind to the viral genome. Fe cation serves as cofactor. Mn(2+) is required as a cofactor. In terms of processing, phosphorylated. Dephosphorylated at Thr-320 in the presence of ionizing radiation.

It is found in the cytoplasm. The protein localises to the nucleus. The protein resides in the nucleoplasm. Its subcellular location is the nucleolus. The catalysed reaction is O-phospho-L-seryl-[protein] + H2O = L-seryl-[protein] + phosphate. The enzyme catalyses O-phospho-L-threonyl-[protein] + H2O = L-threonyl-[protein] + phosphate. Its activity is regulated as follows. The phosphatase activity of the PPP1R15A-PP1 complex toward EIF2S1 is specifically inhibited by Salubrinal, a drug that protects cells from endoplasmic reticulum stress. In terms of biological role, protein phosphatase that associates with over 200 regulatory proteins to form highly specific holoenzymes which dephosphorylate hundreds of biological targets. Protein phosphatase 1 (PP1) is essential for cell division, transcription elongation, and participates in the regulation of glycogen metabolism, muscle contractility and protein synthesis. Involved in regulation of ionic conductances and long-term synaptic plasticity. May play an important role in dephosphorylating substrates such as the postsynaptic density-associated Ca(2+)/calmodulin dependent protein kinase II. Catalytic component of the PNUTS-PP1 protein phosphatase complex, a protein phosphatase 1 (PP1) complex that promotes RNA polymerase II transcription pause-release, allowing transcription elongation: the PNUTS-PP1 complex mediates the release of RNA polymerase II from promoter-proximal region of genes by catalyzing dephosphorylation of proteins involved in transcription, such as AFF4, CDK9, MEPCE, INTS12, NCBP1, POLR2M/GDOWN1 and SUPT6H. The PNUTS-PP1 complex also regulates transcription termination by mediating dephosphorylation of SUPT5H in termination zones downstream of poly(A) sites, thereby promoting deceleration of RNA polymerase II transcription. PNUTS-PP1 complex is also involved in the response to replication stress by mediating dephosphorylation of POLR2A at 'Ser-5' of the CTD, promoting RNA polymerase II degradation. PNUTS-PP1 also plays a role in the control of chromatin structure and cell cycle progression during the transition from mitosis into interphase. Regulates NEK2 function in terms of kinase activity and centrosome number and splitting, both in the presence and absence of radiation-induced DNA damage. Regulator of neural tube and optic fissure closure, and enteric neural crest cell (ENCCs) migration during development. In balance with CSNK1D and CSNK1E, determines the circadian period length, through the regulation of the speed and rhythmicity of PER1 and PER2 phosphorylation. May dephosphorylate CSNK1D and CSNK1E. Dephosphorylates the 'Ser-418' residue of FOXP3 in regulatory T-cells (Treg) from patients with rheumatoid arthritis, thereby inactivating FOXP3 and rendering Treg cells functionally defective. Dephosphorylates CENPA. Dephosphorylates the 'Ser-139' residue of ATG16L1 causing dissociation of ATG12-ATG5-ATG16L1 complex, thereby inhibiting autophagy. Together with PPP1CC (PP1-gamma subunit), dephosphorylates IFIH1/MDA5 and RIG-I leading to their activation and a functional innate immune response. Core component of the SHOC2-MRAS-PP1c (SMP) holophosphatase complex that regulates the MAPK pathway activation. The SMP complex specifically dephosphorylates the inhibitory phosphorylation at 'Ser-259' of RAF1 kinase, 'Ser-365' of BRAF kinase and 'Ser-214' of ARAF kinase, stimulating their kinase activities. The SMP complex enhances the dephosphorylation activity and substrate specificity of PP1c. Functionally, (Microbial infection) Necessary for alphaviruses replication. This chain is Serine/threonine-protein phosphatase PP1-alpha catalytic subunit (PPP1CA), found in Homo sapiens (Human).